The primary structure comprises 583 residues: MLRAGPPSHTLLRLPLLQLLLLLLVQAVGRGLGRASPAGGPLEDVVIERYHIPRVCPREVQMGDFVRYHYNGTFEDGKKFDSSYDRHTLVAIVVGVGRLITGMDRGLMGMCVNERRRLIVPPHLGYGSIGVAGLIPPDATLYFDVVLLDVWNKEDTVQVSTLLRPPHCPRMVQDSDFVRYHYNGTLLDGTAFDTSYSKGGTYDTYVGSGWLIKGMDQGLLGMCPGERRKIVIPPFLAYGEKGYGTVIPSQASLVFHVLLIDVHNPKDTVQLETLELPPGCVRRAVAGDFMRYHYNGSLMDGTLFDSSYSRNHTYNTYVGQGYIIPGMDQGLQGSCMGERRRITIPPHLAYGENGTGDKIPGSAVLIFDVHVIDFHNPADPVEIKTLSRPLETCNETAKLGDFVHYHYNCSLLDGTRLFSSHDYGAPQEATLGAHKVIEGLDTGLQGMCVGERRQLVVPPHLAHGESGARGVPGSAVLLFEVELVSREDGLPTGYLFVWHEDPPAHLFEHMDLNKDGEVPVEEFSTFIKAQVSEGKGRLLPGQDPEKTIGDMFQNQDRNQDGKITAEELKLKSDEDQDRVHEEL.

An N-terminal signal peptide occupies residues 1–27; sequence MLRAGPPSHTLLRLPLLQLLLLLLVQA. 4 consecutive PPIase FKBP-type domains span residues 63 to 151, 175 to 263, 287 to 375, and 400 to 487; these read GDFV…LDVW, SDFV…IDVH, GDFM…IDFH, and GDFV…VSRE. Residues N71, N183, and N295 are each glycosylated (N-linked (GlcNAc...) asparagine). EF-hand domains lie at 498–533 and 543–578; these read WHED…QVSE and DPEK…DQDR. 10 residues coordinate Ca(2+): D511, N513, D515, E517, E522, D556, N558, D560, K562, and E567. The interval 534–583 is disordered; the sequence is GKGRLLPGQDPEKTIGDMFQNQDRNQDGKITAEELKLKSDEDQDRVHEEL. Residues 557–583 are compositionally biased toward basic and acidic residues; sequence RNQDGKITAEELKLKSDEDQDRVHEEL. Positions 580–583 match the Prevents secretion from ER motif; the sequence is HEEL.

In terms of processing, glycosylated and phosphorylated.

The protein resides in the endoplasmic reticulum lumen. The enzyme catalyses [protein]-peptidylproline (omega=180) = [protein]-peptidylproline (omega=0). Inhibited by both FK506 and rapamycin, but not by cyclosporin A. Functionally, PPIases accelerate the folding of proteins during protein synthesis. This is Peptidyl-prolyl cis-trans isomerase FKBP10 (FKBP10) from Bos taurus (Bovine).